We begin with the raw amino-acid sequence, 1644 residues long: Peroxisome proliferator-activated receptor gamma coactivator-related protein 1 (1644 aa).

7 disordered regions span residues 1-61 (MAAR…DSSF), 170-249 (PERD…EVAG), 429-616 (LTPK…TSPV), 646-761 (AADP…PETP), 773-884 (SAPA…QPPG), 978-1074 (STVS…EGVV), and 1322-1507 (AAPP…NDHY). The segment covering 12–22 (APPPTGGPGPD) has biased composition (pro residues). Positions 213–222 (SSPKLPSWRP) are enriched in low complexity. Position 232 is a phosphoserine (S232). Residues 425–460 (IMESLTPKEPQSLPASASQGSQKVPRKGRKKKNKEQ) are necessary for interaction with CREB1 and NRF1 and for transcriptional coactivation. Residues 437 to 446 (LPASASQGSQ) show a composition bias toward polar residues. Positions 448-457 (VPRKGRKKKN) are enriched in basic residues. Residues 475–496 (SSRGQSTVSAEVNSQAGSSQKQ) are compositionally biased toward polar residues. Over residues 515 to 524 (RAWARAWAAA) the composition is skewed to low complexity. S541 bears the Phosphoserine mark. The span at 556-572 (ETSQANPTLSLNDSAQA) shows a compositional bias: polar residues. Residues 691 to 702 (DHPKVVSPEGKD) are compositionally biased toward basic and acidic residues. A compositionally biased stretch (polar residues) spans 811-821 (MVSTHSEQVSS). Pro residues-rich tracts occupy residues 828–864 (VRPPPPPLPSVSPAGPIPSTVPAPLPPFPPSVPPLLP) and 874–884 (RLPPPPLQPPG). Phosphoserine is present on residues S1059, S1393, and S1395. A necessary for interaction with CREB1 and NRF1 region spans residues 1361–1432 (EASPCRSEMN…SSSSSVSSSS (72 aa)). Composition is skewed to low complexity over residues 1409–1433 (SRSVSSGSSRTSEASSSSSVSSSSR) and 1453–1489 (SSCSSSGRSRRCSSSSSSSSSSSSCSSRSRSPSVSPC). One can recognise an RRM domain in the interval 1523-1599 (RVVFIGKIPG…QPFDLCFGGR (77 aa)).

As to quaternary structure, interacts with CREB1 and NRF1. Expressed in liver, heart, skeletal muscle, kidney and white and brown adipose tissues.

The protein resides in the nucleus. Acts as a coactivator during transcriptional activation of nuclear genes related to mitochondrial biogenesis and cell growth. Involved in the transcription coactivation of CREB and NRF1 target genes. The chain is Peroxisome proliferator-activated receptor gamma coactivator-related protein 1 (Pprc1) from Mus musculus (Mouse).